Reading from the N-terminus, the 113-residue chain is Large ribosomal subunit protein bL19 (113 aa).

It belongs to the bacterial ribosomal protein bL19 family.

This protein is located at the 30S-50S ribosomal subunit interface and may play a role in the structure and function of the aminoacyl-tRNA binding site. The polypeptide is Large ribosomal subunit protein bL19 (Corynebacterium efficiens (strain DSM 44549 / YS-314 / AJ 12310 / JCM 11189 / NBRC 100395)).